The chain runs to 732 residues: Nephrocystin-1 (732 aa).

A coiled-coil region spans residues 3-105 (ARRQRDPLQA…LQGLAVTISR (103 aa)). At tyrosine 46 the chain carries Phosphotyrosine; by FAK2. Disordered regions lie at residues 103-153 (ISRE…KWST) and 205-244 (TYLEPYSEEEEGQESSEEGSEEDVEAVDETADGAEVKQRT). Composition is skewed to acidic residues over residues 115 to 145 (TEEEEESESEDSEDSGGEEEDAEEEEEEKEE) and 210 to 236 (YSEEEEGQESSEEGSEEDVEAVDETAD). Phosphoserine; by CK2 occurs at positions 121, 123, and 126. The stretch at 127-150 (EDSGGEEEDAEEEEEEKEENESHK) forms a coiled coil. The SH3 domain maps to 152 to 212 (STGEEYIAVG…PRTYLEPYSE (61 aa)). Position 349 is a phosphotyrosine; by FAK2 (tyrosine 349). Residue tyrosine 721 is modified to Phosphotyrosine; by SRC.

This sequence belongs to the nephrocystin-1 family. Interacts with BCAR1, PTK2B/PYK2 and tensin. Interacts with INVS and NPHP3. Interacts with PACS1; the interaction is dependent on NPHP1 phosphorylation by CK2. Interacts with KIF7. Interacts with AHI1 and TNK2. Interacts with NPHP4 in a complex containing NPHP1, NPHP4 and RPGRIP1L. Interacts with IQCB1; the interaction likely requires additional interactors. Interacts with ANKS3. Interacts with SPATA7. Interacts with FLNA. Phosphorylation by CK2 is required for the interaction with PACS1 and the targeting to the base region of cilia. Widespread expression, with highest levels in pituitary gland, spinal cord, thyroid gland, testis, skeletal muscle, lymph node and trachea. Weakly expressed in heart, kidney and pancreas. Expressed in nasal epithelial cells (at protein level). Expressed in the renal collecting duct (at protein level).

The protein localises to the cell junction. The protein resides in the adherens junction. It is found in the cell projection. Its subcellular location is the cilium. It localises to the cytoplasm. The protein localises to the cytoskeleton. The protein resides in the cilium axoneme. It is found in the tight junction. Together with BCAR1 it may play a role in the control of epithelial cell polarity. Involved in the organization of apical junctions in kidney cells together with NPHP4 and RPGRIP1L/NPHP8. Does not seem to be strictly required for ciliogenesis. Seems to help to recruit PTK2B/PYK2 to cell matrix adhesions, thereby initiating phosphorylation of PTK2B/PYK2 and PTK2B/PYK2-dependent signaling. May play a role in the regulation of intraflagellar transport (IFT) during cilia assembly. Required for normal retina development. In connecting photoreceptor cilia influences the movement of some IFT proteins such as IFT88 and WDR19. Involved in spermatogenesis. This chain is Nephrocystin-1 (NPHP1), found in Homo sapiens (Human).